We begin with the raw amino-acid sequence, 367 residues long: S-adenosylmethionine decarboxylase proenzyme 3 (367 aa).

Residues E9 and E12 contribute to the active site. The Schiff-base intermediate with substrate; via pyruvic acid role is filled by S69. S69 bears the Pyruvic acid (Ser); by autocatalysis mark. Catalysis depends on C83, which acts as the Proton donor; for catalytic activity. Residues S234 and H247 each act as proton acceptor; for processing activity in the active site.

Belongs to the eukaryotic AdoMetDC family. Pyruvate is required as a cofactor. Is synthesized initially as an inactive proenzyme. Formation of the active enzyme involves a self-maturation process in which the active site pyruvoyl group is generated from an internal serine residue via an autocatalytic post-translational modification. Two non-identical subunits are generated from the proenzyme in this reaction, and the pyruvate is formed at the N-terminus of the alpha chain, which is derived from the carboxyl end of the proenzyme. The post-translation cleavage follows an unusual pathway, termed non-hydrolytic serinolysis, in which the side chain hydroxyl group of the serine supplies its oxygen atom to form the C-terminus of the beta chain, while the remainder of the serine residue undergoes an oxidative deamination to produce ammonia and the pyruvoyl group blocking the N-terminus of the alpha chain.

The catalysed reaction is S-adenosyl-L-methionine + H(+) = S-adenosyl 3-(methylsulfanyl)propylamine + CO2. It participates in amine and polyamine biosynthesis; S-adenosylmethioninamine biosynthesis; S-adenosylmethioninamine from S-adenosyl-L-methionine: step 1/1. This chain is S-adenosylmethionine decarboxylase proenzyme 3 (SAMDC3), found in Brassica juncea (Indian mustard).